A 415-amino-acid polypeptide reads, in one-letter code: Serine hydroxymethyltransferase (415 aa).

Residues Leu119 and 123–125 (GHL) each bind (6S)-5,6,7,8-tetrahydrofolate. Lys228 is subject to N6-(pyridoxal phosphate)lysine. Residue 353–355 (SAF) coordinates (6S)-5,6,7,8-tetrahydrofolate.

The protein belongs to the SHMT family. In terms of assembly, homodimer. Requires pyridoxal 5'-phosphate as cofactor.

The protein localises to the cytoplasm. It carries out the reaction (6R)-5,10-methylene-5,6,7,8-tetrahydrofolate + glycine + H2O = (6S)-5,6,7,8-tetrahydrofolate + L-serine. The protein operates within one-carbon metabolism; tetrahydrofolate interconversion. It participates in amino-acid biosynthesis; glycine biosynthesis; glycine from L-serine: step 1/1. Catalyzes the reversible interconversion of serine and glycine with tetrahydrofolate (THF) serving as the one-carbon carrier. Also exhibits THF-independent aldolase activity toward beta-hydroxyamino acids, producing glycine and aldehydes, via a retro-aldol mechanism. In Halobacterium salinarum (strain ATCC 29341 / DSM 671 / R1), this protein is Serine hydroxymethyltransferase.